A 378-amino-acid polypeptide reads, in one-letter code: AA13 family lytic polysaccharide monooxygenase A (378 aa).

Positions 1-17 are cleaved as a signal peptide; the sequence is MKWSVIQALALASGVQA. Residue His-18 coordinates Cu(2+). His-18 is modified (methylhistidine). Residues 18 to 244 form the Chitin-binding type-4 domain; it reads HGYLTFPMSR…PQIYLTCADI (227 aa). Intrachain disulfides connect Cys-39-Cys-42, Cys-65-Cys-241, Cys-101-Cys-199, Cys-117-Cys-144, Cys-152-Cys-160, Cys-166-Cys-172, and Cys-180-Cys-188. Residue His-108 participates in Cu(2+) binding. The N-linked (GlcNAc...) asparagine glycan is linked to Asn-221. Tyr-238 lines the Cu(2+) pocket. A compositionally biased stretch (low complexity) spans 250-263; that stretch reads DSQSPPTTTTTSTP. A disordered region spans residues 250 to 272; it reads DSQSPPTTTTTSTPASPPPTSCA. Positions 272–378 constitute a CBM20 domain; the sequence is ATPAASVAVT…GTATVDTAWK (107 aa).

It belongs to the polysaccharide monooxygenase AA13 family. Cu(2+) serves as cofactor. O-mannosylated.

It is found in the secreted. It catalyses the reaction starch + reduced acceptor + O2 = D-glucono-1,5-lactone-terminated malto-oligosaccharides + short-chain malto-oligosaccharides + acceptor + H2O.. Activity is inhibited by both beta-cyclodextrin or amylose that block the access to the active site. Its function is as follows. Starch-active lytic polysaccharide monooxygenase that oxidizes the C1 position of starch substrates. Catalysis by LPMOs requires the reduction of the active-site copper from Cu(II) to Cu(I) by a reducing agent and H(2)O(2) or O(2) as a cosubstrate. The sequence is that of AA13 family lytic polysaccharide monooxygenase A from Pyricularia oryzae (strain 70-15 / ATCC MYA-4617 / FGSC 8958) (Rice blast fungus).